A 310-amino-acid chain; its full sequence is Probable metallo-hydrolase Mb2322c (310 aa).

The tract at residues 1–29 (MVATRGRPCPTNFSRPQRPRVAGNGTKSQ) is disordered. Zn(2+)-binding residues include histidine 137, aspartate 139, aspartate 141, histidine 142, histidine 221, aspartate 242, and histidine 288.

The protein belongs to the metallo-beta-lactamase superfamily. Zn(2+) is required as a cofactor.

The chain is Probable metallo-hydrolase Mb2322c from Mycobacterium bovis (strain ATCC BAA-935 / AF2122/97).